A 151-amino-acid polypeptide reads, in one-letter code: uncharacterized protein (151 aa).

Positions 1 to 77 (MSLLGGMWKS…LGSNPISSSR (77 aa)) are disordered. Low complexity-rich tracts occupy residues 19–54 (PKPS…RSSN) and 63–76 (SISG…ISSS).

This is an uncharacterized protein from Methanothermobacter marburgensis (strain ATCC BAA-927 / DSM 2133 / JCM 14651 / NBRC 100331 / OCM 82 / Marburg) (Methanobacterium thermoautotrophicum).